The sequence spans 240 residues: Uridylate kinase (240 aa).

12-15 (KLSG) contacts ATP. An involved in allosteric activation by GTP region spans residues 20 to 25 (GSQGFG). Residue glycine 54 participates in UMP binding. The ATP site is built by glycine 55 and arginine 59. Residues aspartate 74 and 135 to 142 (TGNPYFST) each bind UMP. ATP-binding residues include tyrosine 168 and aspartate 171.

Belongs to the UMP kinase family. As to quaternary structure, homohexamer.

It localises to the cytoplasm. The enzyme catalyses UMP + ATP = UDP + ADP. The protein operates within pyrimidine metabolism; CTP biosynthesis via de novo pathway; UDP from UMP (UMPK route): step 1/1. Allosterically activated by GTP. Inhibited by UTP. In terms of biological role, catalyzes the reversible phosphorylation of UMP to UDP. The sequence is that of Uridylate kinase from Desulfitobacterium hafniense (strain Y51).